A 353-amino-acid polypeptide reads, in one-letter code: Protein RecA (353 aa).

67 to 74 provides a ligand contact to ATP; sequence GPESSGKT.

The protein belongs to the RecA family.

The protein localises to the cytoplasm. In terms of biological role, can catalyze the hydrolysis of ATP in the presence of single-stranded DNA, the ATP-dependent uptake of single-stranded DNA by duplex DNA, and the ATP-dependent hybridization of homologous single-stranded DNAs. It interacts with LexA causing its activation and leading to its autocatalytic cleavage. The sequence is that of Protein RecA from Salmonella paratyphi A (strain ATCC 9150 / SARB42).